The following is a 38-amino-acid chain: Cytochrome b6-f complex subunit 5 (38 aa).

The chain crosses the membrane as a helical span at residues 5–25 (LLLGIVLGLIPITLAGLFVAA).

The protein belongs to the PetG family. The 4 large subunits of the cytochrome b6-f complex are cytochrome b6, subunit IV (17 kDa polypeptide, PetD), cytochrome f and the Rieske protein, while the 4 small subunits are PetG, PetL, PetM and PetN. The complex functions as a dimer.

Its subcellular location is the cellular thylakoid membrane. Functionally, component of the cytochrome b6-f complex, which mediates electron transfer between photosystem II (PSII) and photosystem I (PSI), cyclic electron flow around PSI, and state transitions. PetG is required for either the stability or assembly of the cytochrome b6-f complex. The chain is Cytochrome b6-f complex subunit 5 from Rippkaea orientalis (strain PCC 8801 / RF-1) (Cyanothece sp. (strain PCC 8801)).